The sequence spans 188 residues: dCTP deaminase (188 aa).

DCTP-binding positions include 111–116 (KSTYAR), 135–137 (TLE), Gln-156, Tyr-170, and Gln-180. Glu-137 functions as the Proton donor/acceptor in the catalytic mechanism.

Belongs to the dCTP deaminase family. In terms of assembly, homotrimer.

The catalysed reaction is dCTP + H2O + H(+) = dUTP + NH4(+). Its pathway is pyrimidine metabolism; dUMP biosynthesis; dUMP from dCTP (dUTP route): step 1/2. Functionally, catalyzes the deamination of dCTP to dUTP. The protein is dCTP deaminase of Ralstonia pickettii (strain 12J).